The following is a 590-amino-acid chain: Protein phosphatase PP2A regulatory subunit A (590 aa).

11 HEAT repeats span residues 12–50 (PIAV…TRDE), 89–127 (LLSP…LEQY), 206–244 (FIPL…EIRH), 246–284 (LLQP…IKDE), 285–323 (LIKP…VLEE), 324–362 (IIPV…TTEY), 363–401 (LLPM…LSQS), 402–440 (LLPA…FNEK), 480–518 (IIPK…IEKQ), 519–551 (ILPT…VLAA), and 562–590 (IIPL…QTND).

The protein belongs to the phosphatase 2A regulatory subunit A family. In terms of assembly, PP2A exists in several trimeric forms, all of which consist of a core composed of a catalytic subunit associated with a 65 kDa (PR65) (Subunit A) and a 55 kDa (PR55) (Subunit B) regulatory subunit.

Functionally, phosphatase 2A affects a variety of biological processes in the cell such as transcription, cell cycle progression and cellular morphogenesis, and provides an initial identification of critical substrates for this phosphatase. The regulatory subunit may direct the catalytic subunit to distinct, albeit overlapping, subsets of substrates. This is Protein phosphatase PP2A regulatory subunit A (paa1) from Schizosaccharomyces pombe (strain 972 / ATCC 24843) (Fission yeast).